A 372-amino-acid chain; its full sequence is NAD(P)H-quinone oxidoreductase subunit 1 (372 aa).

Helical transmembrane passes span 27 to 47 (IIWL…GVLV), 97 to 117 (ILFT…WLIV), 128 to 148 (VGIG…GLLM), 176 to 196 (LALS…IDIV), 204 to 224 (ILSW…ICAL), 266 to 286 (ILSA…PIPV), 308 to 328 (SIGI…AILL), and 347 to 367 (FLLP…LAFP).

The protein belongs to the complex I subunit 1 family. As to quaternary structure, NDH-1 is composed of at least 11 different subunits.

The protein resides in the cellular thylakoid membrane. The catalysed reaction is a plastoquinone + NADH + (n+1) H(+)(in) = a plastoquinol + NAD(+) + n H(+)(out). It catalyses the reaction a plastoquinone + NADPH + (n+1) H(+)(in) = a plastoquinol + NADP(+) + n H(+)(out). NDH-1 shuttles electrons from an unknown electron donor, via FMN and iron-sulfur (Fe-S) centers, to quinones in the respiratory and/or the photosynthetic chain. The immediate electron acceptor for the enzyme in this species is believed to be plastoquinone. Couples the redox reaction to proton translocation, and thus conserves the redox energy in a proton gradient. This is NAD(P)H-quinone oxidoreductase subunit 1 from Prochlorococcus marinus (strain MIT 9215).